The sequence spans 261 residues: Glucosamine-6-phosphate deaminase (261 aa).

The active-site Proton acceptor; for enolization step is D67. N136 serves as the catalytic For ring-opening step. The active-site Proton acceptor; for ring-opening step is the H138. The active-site For ring-opening step is the E143.

The protein belongs to the glucosamine/galactosamine-6-phosphate isomerase family. NagB subfamily.

The enzyme catalyses alpha-D-glucosamine 6-phosphate + H2O = beta-D-fructose 6-phosphate + NH4(+). It participates in amino-sugar metabolism; N-acetylneuraminate degradation; D-fructose 6-phosphate from N-acetylneuraminate: step 5/5. Its function is as follows. Catalyzes the reversible isomerization-deamination of glucosamine 6-phosphate (GlcN6P) to form fructose 6-phosphate (Fru6P) and ammonium ion. This is Glucosamine-6-phosphate deaminase from Cutibacterium acnes (strain DSM 16379 / KPA171202) (Propionibacterium acnes).